Consider the following 67-residue polypeptide: DNA-directed RNA polymerase subunit omega (67 aa).

This sequence belongs to the RNA polymerase subunit omega family. As to quaternary structure, the RNAP catalytic core consists of 2 alpha, 1 beta, 1 beta' and 1 omega subunit. When a sigma factor is associated with the core the holoenzyme is formed, which can initiate transcription.

It carries out the reaction RNA(n) + a ribonucleoside 5'-triphosphate = RNA(n+1) + diphosphate. Functionally, promotes RNA polymerase assembly. Latches the N- and C-terminal regions of the beta' subunit thereby facilitating its interaction with the beta and alpha subunits. This is DNA-directed RNA polymerase subunit omega from Bordetella petrii (strain ATCC BAA-461 / DSM 12804 / CCUG 43448).